The primary structure comprises 750 residues: Photosystem I P700 chlorophyll a apoprotein A1 (750 aa).

Transmembrane regions (helical) follow at residues 70–93 (VFSAHFGQLSIIFLWLSGMYFHGA), 156–179 (LYCTAIGALVFAALMLFAGWFHYH), 195–219 (LNHHLAGLLGLGSLSWAGHQVHVSL), 291–309 (IAHHHLAIAILFLIAGHMY), 346–369 (WHAQLSINLAMLGSLTIIVAHHMY), 385–411 (LSLFTHHMWIGGFLIVGAAAHAAIFMV), 433–455 (AIISHLNWVCIFLGFHSFGLYIH), and 531–549 (FLVHHIHAFTIHVTVLILL). C573 and C582 together coordinate [4Fe-4S] cluster. 2 consecutive transmembrane segments (helical) span residues 589 to 610 (HVFLGLFWMYNSISVVIFHFSW) and 664 to 686 (LSAYGLFFLGAHFVWAFSLMFLF). H675 lines the chlorophyll a' pocket. Chlorophyll a-binding residues include M683 and Y691. Residue W692 participates in phylloquinone binding. The helical transmembrane segment at 724–744 (AVGVTHYLLGGIATTWAFFLA) threads the bilayer.

This sequence belongs to the PsaA/PsaB family. The PsaA/B heterodimer binds the P700 chlorophyll special pair and subsequent electron acceptors. PSI consists of a core antenna complex that captures photons, and an electron transfer chain that converts photonic excitation into a charge separation. The eukaryotic PSI reaction center is composed of at least 11 subunits. Requires P700 is a chlorophyll a/chlorophyll a' dimer, A0 is one or more chlorophyll a, A1 is one or both phylloquinones and FX is a shared 4Fe-4S iron-sulfur center. as cofactor.

It localises to the plastid. It is found in the chloroplast thylakoid membrane. It carries out the reaction reduced [plastocyanin] + hnu + oxidized [2Fe-2S]-[ferredoxin] = oxidized [plastocyanin] + reduced [2Fe-2S]-[ferredoxin]. In terms of biological role, psaA and PsaB bind P700, the primary electron donor of photosystem I (PSI), as well as the electron acceptors A0, A1 and FX. PSI is a plastocyanin-ferredoxin oxidoreductase, converting photonic excitation into a charge separation, which transfers an electron from the donor P700 chlorophyll pair to the spectroscopically characterized acceptors A0, A1, FX, FA and FB in turn. Oxidized P700 is reduced on the lumenal side of the thylakoid membrane by plastocyanin. The sequence is that of Photosystem I P700 chlorophyll a apoprotein A1 from Cucumis sativus (Cucumber).